Here is a 708-residue protein sequence, read N- to C-terminus: Solute carrier family 15 member 1 (708 aa).

The chain crosses the membrane as a helical span at residues 1 to 21 (MGMSKSHSFFGYPLSIFFIVV). At 22–53 (NEFCERFSYYGMRAILILYFTNFISWDDNLST) the chain is on the extracellular side. A glycan (N-linked (GlcNAc...) asparagine) is linked at asparagine 50. Residues 54–74 (AIYHTFVALCYLTPILGALIA) form a helical membrane-spanning segment. The Cytoplasmic segment spans residues 75–82 (DSWLGKFK). A helical transmembrane segment spans residues 83–103 (TIVSLSIVYTIGQAVTSVSSI). The Extracellular portion of the chain corresponds to 104-118 (NDLTDHNHDGTPDSL). A helical membrane pass occupies residues 119–139 (PVHVVLSLIGLALIALGTGGI). At 140 to 161 (KPCVSAFGGDQFEEGQEKQRNR) the chain is on the cytoplasmic side. Residues 162-182 (FFSIFYLAINAGSLLSTIITP) traverse the membrane as a helical segment. Residues 183–198 (MLRVQQCGIHSKQACY) lie on the Extracellular side of the membrane. The helical transmembrane segment at 199 to 219 (PLAFGVPAALMAVALIVFVLG) threads the bilayer. The Cytoplasmic segment spans residues 220–276 (SGMYKKFKPQGNIMGKVAKCIGFAIKNRFRHRSKAFPKREHWLDWAKEKYDERLISQ). A helical membrane pass occupies residues 277–297 (IKMVTRVMFLYIPLPMFWALF). The Extracellular portion of the chain corresponds to 298–327 (DQQGSRWTLQATTMSGKIGALEIQPDQMQT). The helical transmembrane segment at 328–348 (VNAILIVIMVPIFDAVLYPLI) threads the bilayer. Topologically, residues 349-361 (AKCGFNFTSLKKM) are cytoplasmic. A helical transmembrane segment spans residues 362 to 382 (AVGMVLASMAFVVAAIVQVEI). Over 383 to 584 (DKTLPVFPKG…SANTVNMALQ (202 aa)) the chain is Extracellular. An extracellular domain (ECD) region spans residues 383 to 584 (DKTLPVFPKG…SANTVNMALQ (202 aa)). 6 N-linked (GlcNAc...) asparagine glycosylation sites follow: asparagine 404, asparagine 408, asparagine 439, asparagine 509, asparagine 514, and asparagine 562. A helical membrane pass occupies residues 585–605 (IPQYFLLTCGEVVFSVTGLEF). Residues 606–619 (SYSQAPSNMKSVLQ) are Cytoplasmic-facing. A helical transmembrane segment spans residues 620-640 (AGWLLTVAVGNIIVLIVAGAG). Residues 641 to 645 (QFSKQ) lie on the Extracellular side of the membrane. Residues 646–666 (WAEYILFAALLLVVCVIFAIM) traverse the membrane as a helical segment. Residues 667 to 708 (ARFYTYINPAEIEAQFDEDEKKNRLEKSNPYFMSGANSQKQM) lie on the Cytoplasmic side of the membrane.

Belongs to the major facilitator superfamily. Proton-dependent oligopeptide transporter (POT/PTR) (TC 2.A.17) family. Interacts (via extracellular domain region) with trypsin. As to expression, expressed in small intestine.

It is found in the apical cell membrane. It catalyses the reaction a dipeptide(out) + H(+)(out) = a dipeptide(in) + H(+)(in). It carries out the reaction an L-amino acid tripeptide(out) + H(+)(out) = an L-amino acid tripeptide(in) + H(+)(in). The catalysed reaction is L-alanyl-L-lysine(out) + H(+)(out) = L-alanyl-L-lysine(in) + H(+)(in). The enzyme catalyses L-alanyl-L-proline(out) + H(+)(out) = L-alanyl-L-proline(in) + H(+)(in). It catalyses the reaction L-alanyl-L-valine(out) + H(+)(out) = L-alanyl-L-valine(in) + H(+)(in). It carries out the reaction carnosine(out) + H(+)(out) = carnosine(in) + H(+)(in). The catalysed reaction is glycyl-L-glutamine(out) + H(+)(out) = glycyl-L-glutamine(in) + H(+)(in). The enzyme catalyses glycyl-L-leucine(out) + H(+)(out) = glycyl-L-leucine(in) + H(+)(in). It catalyses the reaction glycyl-L-proline(out) + H(+)(out) = glycyl-L-proline(in) + H(+)(in). It carries out the reaction glycyl-sarcosine(out) + H(+)(out) = glycyl-sarcosine(in) + H(+)(in). The catalysed reaction is L-leucyl-L-leucine(out) + H(+)(out) = L-leucyl-L-leucine(in) + H(+)(in). The enzyme catalyses L-leucyl-L-proline(out) + H(+)(out) = L-leucyl-L-proline(in) + H(+)(in). It catalyses the reaction L-phenylalanyl-L-leucine(out) + H(+)(out) = L-phenylalanyl-L-leucine(in) + H(+)(in). It carries out the reaction L-phenylalanyl-L-phenylalanine(out) + H(+)(out) = L-phenylalanyl-L-phenylalanine(in) + H(+)(in). The catalysed reaction is L-lysyl-glycine(out) + H(+)(out) = L-lysyl-glycine(in) + H(+)(in). The enzyme catalyses L-tyrosylglycine(out) + H(+)(out) = L-tyrosylglycine(in) + H(+)(in). It catalyses the reaction L-alanyl-L-aspartate(out) + 2 H(+)(out) = L-alanyl-L-aspartate(in) + 2 H(+)(in). It carries out the reaction L-aspartyl-glycine(out) + 2 H(+)(out) = L-aspartyl-glycine(in) + 2 H(+)(in). The catalysed reaction is glycyl-L-aspartate(out) + 2 H(+)(out) = glycyl-L-aspartate(in) + 2 H(+)(in). The enzyme catalyses glycyl-L-glutamate(out) + 2 H(+)(out) = glycyl-L-glutamate(in) + 2 H(+)(in). It catalyses the reaction L-alanyl-L-leucyl-L-alanine(out) + H(+)(out) = L-alanyl-L-leucyl-L-alanine(in) + H(+)(in). It carries out the reaction L-alanyl-L-prolylglycine(out) + H(+)(out) = L-alanyl-L-prolylglycine(in) + H(+)(in). The catalysed reaction is glycylglycyl-L-isoleucine(out) + H(+)(out) = glycylglycyl-L-isoleucine(in) + H(+)(in). The enzyme catalyses glycylglycyl-L-proline(out) + H(+)(out) = glycylglycyl-L-proline(in) + H(+)(in). It catalyses the reaction L-methionyl-L-phenylalanyl-L-methionine(out) + H(+)(out) = L-methionyl-L-phenylalanyl-L-methionine(in) + H(+)(in). It carries out the reaction N-acetyl-D-muramoyl-L-alanyl-D-isoglutamine(out) + 2 H(+)(out) = N-acetyl-D-muramoyl-L-alanyl-D-isoglutamine(in) + 2 H(+)(in). The catalysed reaction is N(alpha)-formyl-L-methionyl-L-leucyl-L-phenylalanine(out) + 2 H(+)(out) = N(alpha)-formyl-L-methionyl-L-leucyl-L-phenylalanine(in) + 2 H(+)(in). Its function is as follows. Electrogenic proton-coupled amino-acid transporter that transports oligopeptides of 2 to 4 amino acids with a preference for dipeptides. Transports neutral and monovalently charged peptides with a proton to peptide stoichiometry of 1:1 or 2:1. Primarily responsible for the absorption of dietary di- and tripeptides from the small intestinal lumen. Mediates transepithelial transport of muramyl and N-formylated bacterial dipeptides contributing to recognition of pathogenic bacteria by the mucosal immune system. This chain is Solute carrier family 15 member 1, found in Homo sapiens (Human).